Here is a 336-residue protein sequence, read N- to C-terminus: Protein-glutamate methylesterase/protein-glutamine glutaminase 1 (336 aa).

The Response regulatory domain occupies 2–119; it reads KIAIVNDMPL…GNPQEAAAPL (118 aa). Aspartate 53 bears the 4-aspartylphosphate mark. A CheB-type methylesterase domain is found at 147-336; sequence TASRQRLVAI…APRLLEIFPK (190 aa). Residues serine 159, histidine 186, and aspartate 279 contribute to the active site.

This sequence belongs to the CheB family. In terms of processing, phosphorylated by CheA. Phosphorylation of the N-terminal regulatory domain activates the methylesterase activity.

It localises to the cytoplasm. The catalysed reaction is [protein]-L-glutamate 5-O-methyl ester + H2O = L-glutamyl-[protein] + methanol + H(+). It carries out the reaction L-glutaminyl-[protein] + H2O = L-glutamyl-[protein] + NH4(+). In terms of biological role, involved in chemotaxis. Part of a chemotaxis signal transduction system that modulates chemotaxis in response to various stimuli. Catalyzes the demethylation of specific methylglutamate residues introduced into the chemoreceptors (methyl-accepting chemotaxis proteins or MCP) by CheR. Also mediates the irreversible deamidation of specific glutamine residues to glutamic acid. The sequence is that of Protein-glutamate methylesterase/protein-glutamine glutaminase 1 from Pseudomonas fluorescens (strain Pf0-1).